The chain runs to 498 residues: PE-PGRS family protein PE_PGRS33 (498 aa).

Residues 1-30 (MSFVVTIPEALAAVATDLAGIGSTIGTANA) are essential for translocation to the cell surface. The 93-residue stretch at 1–93 (MSFVVTIPEA…AGSYAAAEAA (93 aa)) folds into the PE domain. The interacts with TLR2 stretch occupies residues 140 to 260 (GNGGAGGSGA…GLFFGVGGAG (121 aa)).

Belongs to the mycobacterial PE family. PGRS subfamily. In terms of assembly, interacts with human TLR2.

The protein localises to the secreted. The protein resides in the cell wall. Its subcellular location is the cell surface. It is found in the cell outer membrane. With respect to regulation, binding of Ca(2+) to PE_PGRS33 induces conformational changes and increases affinity for TLR2. Functionally, induces TNF-alpha release through human Toll-like receptor 2 (TLR2) signaling pathway, leading to macrophage apoptosis. The signaling pathway involves TLR2-dependent activation of the mitogen-activated protein kinase kinase kinase 5 (ASK1), which activates the p38 and JNK MAPKs, leading to enhanced expression of TNF-alpha and tumor necrosis factor receptor superfamily member 1A (TNFRI) genes. Signals are amplified through classical caspase 8-dependent mitochondrial release of cytochrome c, leading to the activation of caspases 9 and 3. Mediates Ca(2+)-dependent up-regulation of the anti-inflammatory cytokine IL-10. Mediates entry into macrophages in a TLR2-dependent mechanism and activates the TLR2-dependent pro-adhesive pathway. This is PE-PGRS family protein PE_PGRS33 from Mycobacterium tuberculosis (strain ATCC 25618 / H37Rv).